The sequence spans 1062 residues: Roc-COR-CHAT protease (1062 aa).

8 LRR repeats span residues 70 to 94 (LAGL…HLQQ), 95 to 116 (LRLL…GSMP), 115 to 141 (MPLL…ALQK), 142 to 159 (LDVS…SACP), 160 to 180 (ALWW…MPAG), 181 to 203 (FKAL…NGKL), 204 to 226 (PKLV…LLLP), and 228 to 249 (GLET…IRGS). One can recognise a COR domain in the interval 470 to 660 (DWLGVMEELQ…GLMWKDNVVF (191 aa)). Residues 836 to 856 (ERDNDHTGLSDSSDQEDETFT) are disordered. Catalysis depends on residues H931 and C980.

Functionally, a dedicated protease for substrate gasdermin bGSDM; cleaves the bGSDM precursor, releasing the pore-forming moiety, which integrates into the membrane and triggers cell death. Probably involved in defense against bacteriophages. Expression of bGSDM and this neighboring protease is highly toxic in E.coli. This Unknown prokaryotic organism protein is Roc-COR-CHAT protease.